We begin with the raw amino-acid sequence, 297 residues long: uncharacterized protein (297 aa).

E46 is an active-site residue.

The protein belongs to the PhzF family. As to quaternary structure, homodimer and homotetramer.

This is an uncharacterized protein from Salmonella typhimurium (strain LT2 / SGSC1412 / ATCC 700720).